The sequence spans 156 residues: Ribonuclease H (156 aa).

Residues 1 to 142 (MGKQVEIFTD…CDELARAAAN (142 aa)) form the RNase H type-1 domain. Residues D10, E48, D70, and D134 each coordinate Mg(2+).

It belongs to the RNase H family. Monomer. Mg(2+) serves as cofactor.

The protein localises to the cytoplasm. The catalysed reaction is Endonucleolytic cleavage to 5'-phosphomonoester.. In terms of biological role, endonuclease that specifically degrades the RNA of RNA-DNA hybrids. The chain is Ribonuclease H from Photorhabdus laumondii subsp. laumondii (strain DSM 15139 / CIP 105565 / TT01) (Photorhabdus luminescens subsp. laumondii).